The following is a 136-amino-acid chain: Protein NrdI (136 aa).

Belongs to the NrdI family.

In terms of biological role, probably involved in ribonucleotide reductase function. The polypeptide is Protein NrdI (Citrobacter koseri (strain ATCC BAA-895 / CDC 4225-83 / SGSC4696)).